We begin with the raw amino-acid sequence, 125 residues long: Large ribosomal subunit protein bL12 (125 aa).

This sequence belongs to the bacterial ribosomal protein bL12 family. As to quaternary structure, homodimer. Part of the ribosomal stalk of the 50S ribosomal subunit. Forms a multimeric L10(L12)X complex, where L10 forms an elongated spine to which 2 to 4 L12 dimers bind in a sequential fashion. Binds GTP-bound translation factors.

Forms part of the ribosomal stalk which helps the ribosome interact with GTP-bound translation factors. Is thus essential for accurate translation. In Anaeromyxobacter sp. (strain Fw109-5), this protein is Large ribosomal subunit protein bL12.